Consider the following 89-residue polypeptide: Small ribosomal subunit protein bS20 (89 aa).

2 disordered regions span residues 1–25 and 69–89; these read MANIKSAIKRAKTSEKRRAHNASMK and KNAASRQKSRLAKKLNSIQAS. Basic residues predominate over residues 7–20; it reads AIKRAKTSEKRRAH.

The protein belongs to the bacterial ribosomal protein bS20 family.

Its function is as follows. Binds directly to 16S ribosomal RNA. This Geobacillus kaustophilus (strain HTA426) protein is Small ribosomal subunit protein bS20.